The primary structure comprises 448 residues: MKSYEVNFDGLVGPTHNYGGLSYGNVASQSNSQQGSNPREAALQGLAKMKALMEMGFQQGVLAPQERPDVAALRNLGFAGTDAQVIQQAAKQAMPLLVASCSASSMWVANAATVSPSADTADGRVHFTAANLNCKYHRSIEHPTTSRVLGAMFADQKHFAHHAALPAVAQFGDEGAANHTRFCRDYGQAGVEFFVFGRSAFDTRYPAPQKYPARQTLEASQAVARLHGLSEEGVVYAQQNPSVIDQGVFHNDVIAVGNGEVLFYHEDAFLETDKMLAELQGKLGKRGGNFQSICVPRSQVTVEDAVRSYLFNSQLLSRADGSMLLIVPEECRGNERVWQYLQSLTSSGGLIREVKVFDLKQSMQNGGGPACLRLRVALKETELAAVNPGVIMTAPLYDTLTQWVGKHYRDRLSESDLADPQLLLECRTALDELTQILKLGAVYPFQIN.

Residues 19 to 28 (GGLSYGNVAS), asparagine 110, and 137 to 138 (HR) contribute to the substrate site. Glutamate 174 is an active-site residue. Substrate is bound at residue arginine 214. The active site involves histidine 250. Aspartate 252 and asparagine 365 together coordinate substrate. Catalysis depends on cysteine 371, which acts as the Nucleophile.

This sequence belongs to the succinylarginine dihydrolase family. As to quaternary structure, homodimer.

The enzyme catalyses N(2)-succinyl-L-arginine + 2 H2O + 2 H(+) = N(2)-succinyl-L-ornithine + 2 NH4(+) + CO2. The protein operates within amino-acid degradation; L-arginine degradation via AST pathway; L-glutamate and succinate from L-arginine: step 2/5. In terms of biological role, catalyzes the hydrolysis of N(2)-succinylarginine into N(2)-succinylornithine, ammonia and CO(2). This Pseudomonas fluorescens (strain ATCC BAA-477 / NRRL B-23932 / Pf-5) protein is N-succinylarginine dihydrolase.